We begin with the raw amino-acid sequence, 123 residues long: Large ribosomal subunit protein bL20 (123 aa).

This sequence belongs to the bacterial ribosomal protein bL20 family.

Functionally, binds directly to 23S ribosomal RNA and is necessary for the in vitro assembly process of the 50S ribosomal subunit. It is not involved in the protein synthesizing functions of that subunit. This is Large ribosomal subunit protein bL20 from Chlamydia trachomatis serovar L2b (strain UCH-1/proctitis).